Here is a 559-residue protein sequence, read N- to C-terminus: D-2-hydroxyglutarate dehydrogenase, mitochondrial (559 aa).

A mitochondrion-targeting transit peptide spans 1-78 (MMMQKLRRSG…GMLLQQYKCF (78 aa)). One can recognise an FAD-binding PCMH-type domain in the interval 130–309 (YKGSSKLMLL…TKVSILTQPK (180 aa)).

This sequence belongs to the FAD-binding oxidoreductase/transferase type 4 family. As to quaternary structure, homodimer. It depends on FAD as a cofactor.

The protein localises to the mitochondrion. It carries out the reaction (R)-2-hydroxyglutarate + A = 2-oxoglutarate + AH2. In terms of biological role, catalyzes the oxidation of (R)-2-hydroxyglutarate to 2-oxoglutarate. May be involved in the catabolism of propionyl-CoA derived from beta-oxidation. Involved in degradation of lysine for the supply of carbon and electrons to the ETF/ETFQO complex during dark-induced sugar starvation. The chain is D-2-hydroxyglutarate dehydrogenase, mitochondrial (D2HGDH) from Arabidopsis thaliana (Mouse-ear cress).